The sequence spans 104 residues: Flagellar hook-basal body complex protein FliE (104 aa).

It belongs to the FliE family.

The protein localises to the bacterial flagellum basal body. The chain is Flagellar hook-basal body complex protein FliE from Escherichia coli O139:H28 (strain E24377A / ETEC).